The following is a 236-amino-acid chain: Penton protein H240R (236 aa).

The protein belongs to the asfivirus H240R family.

The protein resides in the virion. Its function is as follows. Forms the penton at the fivefold vertices of the icosahedral capsid. Together with the minor capsid proteins (p17, p49, and M1249L), forms a complicated network immediately below the outer capsid shell, stabilizing the whole capsid. This African swine fever virus (isolate Pig/Kenya/KEN-50/1950) (ASFV) protein is Penton protein H240R.